The sequence spans 212 residues: Peptide methionine sulfoxide reductase MsrA (212 aa).

Residue Cys52 is part of the active site.

This sequence belongs to the MsrA Met sulfoxide reductase family.

It carries out the reaction L-methionyl-[protein] + [thioredoxin]-disulfide + H2O = L-methionyl-(S)-S-oxide-[protein] + [thioredoxin]-dithiol. It catalyses the reaction [thioredoxin]-disulfide + L-methionine + H2O = L-methionine (S)-S-oxide + [thioredoxin]-dithiol. Its function is as follows. Has an important function as a repair enzyme for proteins that have been inactivated by oxidation. Catalyzes the reversible oxidation-reduction of methionine sulfoxide in proteins to methionine. The protein is Peptide methionine sulfoxide reductase MsrA of Yersinia pseudotuberculosis serotype O:1b (strain IP 31758).